A 264-amino-acid chain; its full sequence is Tropinone reductase homolog At5g06060 (264 aa).

Position 15-39 (15-39 (LVTGGTRGIGRAVVEELAKFGAKVH)) interacts with NADP(+). Serine 148 provides a ligand contact to substrate. Tyrosine 161 (proton acceptor) is an active-site residue.

It belongs to the short-chain dehydrogenases/reductases (SDR) family. SDR65C subfamily.

This is Tropinone reductase homolog At5g06060 from Arabidopsis thaliana (Mouse-ear cress).